Here is a 253-residue protein sequence, read N- to C-terminus: Oxidoreductase AOL_s00215g277 (253 aa).

A helical membrane pass occupies residues 181 to 203 (FFGYWLTVILGYYIGSLLGYQPF).

The protein belongs to the oxidoreductase OpS7 family.

Its subcellular location is the membrane. The protein operates within secondary metabolite biosynthesis; terpenoid biosynthesis. Its function is as follows. Oxidoreductase; part of the gene cluster that mediates the biosynthesis of sesquiterpenyl epoxy-cyclohexenoids (SECs) such as anthrobotrisins and arthrosporols, metabolites that possess a novel hybrid carbon skeleton consisting of a polyketide-derived epoxycyclohexenol combined with a terpenoid-derived monocyclic sesquiterpenol substructure (PKS-PTS hybrid). The SEC pathway plays an important role for fungal soil colonization via decreasing fungal nematode-capturing ability. Within the pathway, the oxidoreductase AOL_s00215g277 seems to play a role in the farnesylation step of toluquinol to produce farnesyl hydroquinone, the hybrid precursor for biosynthesis of SECs. The pathway begins with the biosynthesis of 6-methylsalicylic acid (6-MSA), the first precursor of the polyketide-derived epoxycyclohexenol in arthrosporols, by the polyketide synthase (PKS) AOL_s00215g283 via condensation of 1 acetate and 3 malonate units. The 6-methylsalicylic acid decarboxylase AOL_s00215g281 then catalyzes the decarboxylation of 6-methylsalicylic acid to yield m-cresol. The cytochrome P450 monooxygenase AOL_s00215g282 further oxidizes m-cresol to yield toluquinol. With the assistance of the oxidoreductase AOL_s00215g277, the polyprenyl transferase AOL_s00215g276 catalyzes the farnesylation of toluquinol to produce farnesyl hydroquinone, the hybrid precursor for biosynthesis of SECs. Farnesyl hydroquinone undergoes epoxidation and then subsequent dehydrogenation to form farnesyl epoxy-quinone, the first and simplest SEC. The cytochrome P450 monooxygenase AOL_s00215g278 and the FAD-dependent monooxygenase AOL_s00215g279 might be involved in the oxygenation of the phenol moiety, most likely in the epoxy formation. The cytochrome P450 monooxygenases AOL_s00215g274 and AOL_s00215g280 are involved in specific regional ketone reductions at respectively C-4 and C-1 of farnesyl epoxy-quinone PubMed:33823587. This Arthrobotrys oligospora (strain ATCC 24927 / CBS 115.81 / DSM 1491) (Nematode-trapping fungus) protein is Oxidoreductase AOL_s00215g277.